Consider the following 1338-residue polypeptide: Aldehyde oxidase 1 (1338 aa).

The 2Fe-2S ferredoxin-type domain occupies serine 5–isoleucine 92. The Mo-molybdopterin site is built by glutamine 113 and cysteine 151. The region spanning phenylalanine 236–lysine 421 is the FAD-binding PCMH-type domain. Residues valine 264–valine 271, alanine 345, serine 354, histidine 358, aspartate 367, and leucine 411 contribute to the FAD site. Mo-molybdopterin is bound by residues alanine 806–phenylalanine 807 and methionine 1047. Serine 1068 carries the post-translational modification Phosphoserine. Residues glycine 1088 to valine 1091, glutamine 1203, and leucine 1268 contribute to the Mo-molybdopterin site. Glutamate 1270 (proton acceptor; for azaheterocycle hydroxylase activity) is an active-site residue.

It belongs to the xanthine dehydrogenase family. As to quaternary structure, homodimer. It depends on [2Fe-2S] cluster as a cofactor. The cofactor is FAD. Requires Mo-molybdopterin as cofactor. As to expression, detected at high levels in liver, also detected in lung, kidney, lacrimal gland and olfactory mucosa.

The protein resides in the cytoplasm. The enzyme catalyses an aldehyde + O2 + H2O = a carboxylate + H2O2 + H(+). It catalyses the reaction retinal + O2 + H2O = retinoate + H2O2 + H(+). Its function is as follows. Oxidase with broad substrate specificity, oxidizing aromatic azaheterocycles, such as N1-methylnicotinamide, N-methylphthalazinium and phthalazine, as well as aldehydes, such as benzaldehyde, retinal, pyridoxal, and vanillin. Plays a key role in the metabolism of xenobiotics and drugs containing aromatic azaheterocyclic substituents. Participates in the bioactivation of prodrugs such as famciclovir, catalyzing the oxidation step from 6-deoxypenciclovir to penciclovir, which is a potent antiviral agent. Is probably involved in the regulation of reactive oxygen species homeostasis. May be a prominent source of superoxide generation via the one-electron reduction of molecular oxygen. May also catalyze nitric oxide (NO) production via the reduction of nitrite to NO with NADH or aldehyde as electron donor. May play a role in adipogenesis. The chain is Aldehyde oxidase 1 (AOX1) from Macaca fascicularis (Crab-eating macaque).